Here is a 349-residue protein sequence, read N- to C-terminus: Ferredoxin--NADP reductase 3 (349 aa).

Residues Glu-34, Lys-42, Tyr-46, Val-86, Ile-120, Asp-287, and Ser-328 each coordinate FAD.

Belongs to the ferredoxin--NADP reductase type 2 family. In terms of assembly, homodimer. It depends on FAD as a cofactor.

The catalysed reaction is 2 reduced [2Fe-2S]-[ferredoxin] + NADP(+) + H(+) = 2 oxidized [2Fe-2S]-[ferredoxin] + NADPH. This Lysinibacillus sphaericus (strain C3-41) protein is Ferredoxin--NADP reductase 3.